The following is a 1028-amino-acid chain: Endosome/lysosome-associated apoptosis and autophagy regulator family member 2 (1028 aa).

The N-terminal stretch at M1–A47 is a signal peptide. Residues G48–K928 lie on the Extracellular side of the membrane. An N-linked (GlcNAc...) asparagine glycan is attached at N168. 3 cysteine pairs are disulfide-bonded: C292–C309, C322–C345, and C325–C357. Residues N404 and N690 are each glycosylated (N-linked (GlcNAc...) asparagine). The region spanning S671 to L876 is the MRH domain. 4 disulfide bridges follow: C673–C719, C729–C757, C826–C862, and C838–C874. The helical transmembrane segment at V929–W949 threads the bilayer. Residues K950–I1028 are Cytoplasmic-facing. S1017 carries the post-translational modification Phosphoserine.

The protein belongs to the ELAPOR family.

It localises to the cell membrane. In terms of biological role, functions as a regulator of the BMP signaling pathway and may be involved in epidermal differentiation. The protein is Endosome/lysosome-associated apoptosis and autophagy regulator family member 2 of Mus musculus (Mouse).